Here is a 239-residue protein sequence, read N- to C-terminus: Probable transcriptional regulatory protein BAA_0622 (239 aa).

Belongs to the TACO1 family. YeeN subfamily.

Its subcellular location is the cytoplasm. This is Probable transcriptional regulatory protein BAA_0622 from Bacillus anthracis (strain A0248).